Reading from the N-terminus, the 239-residue chain is Ribonuclease HII (239 aa).

One can recognise an RNase H type-2 domain in the interval 30 to 221 (GPVAGVDEVG…VRRVATRSNG (192 aa)). A divalent metal cation contacts are provided by aspartate 36, glutamate 37, and aspartate 130. Positions 219–239 (SNGAAAAEREADPPQERDGTG) are disordered. The span at 225 to 239 (AEREADPPQERDGTG) shows a compositional bias: basic and acidic residues.

This sequence belongs to the RNase HII family. Mn(2+) serves as cofactor. Mg(2+) is required as a cofactor.

It is found in the cytoplasm. The enzyme catalyses Endonucleolytic cleavage to 5'-phosphomonoester.. Endonuclease that specifically degrades the RNA of RNA-DNA hybrids. The protein is Ribonuclease HII of Mycobacterium marinum (strain ATCC BAA-535 / M).